We begin with the raw amino-acid sequence, 347 residues long: Phenylalanine--tRNA ligase alpha subunit (347 aa).

Position 265 (Glu265) interacts with Mg(2+).

The protein belongs to the class-II aminoacyl-tRNA synthetase family. Phe-tRNA synthetase alpha subunit type 1 subfamily. In terms of assembly, tetramer of two alpha and two beta subunits. Mg(2+) is required as a cofactor.

Its subcellular location is the cytoplasm. The catalysed reaction is tRNA(Phe) + L-phenylalanine + ATP = L-phenylalanyl-tRNA(Phe) + AMP + diphosphate + H(+). In Wolbachia sp. subsp. Drosophila simulans (strain wRi), this protein is Phenylalanine--tRNA ligase alpha subunit.